Here is a 319-residue protein sequence, read N- to C-terminus: ATP-dependent 6-phosphofructokinase (319 aa).

Gly-11 lines the ATP pocket. 21–25 lines the ADP pocket; the sequence is RAVVR. Residues 72-73 and 102-105 contribute to the ATP site; these read RC and GDGS. Asp-103 is a Mg(2+) binding site. 125–127 is a binding site for substrate; the sequence is TID. Asp-127 (proton acceptor) is an active-site residue. Arg-154 provides a ligand contact to ADP. Substrate-binding positions include Arg-162 and 169 to 171; that span reads MGR. ADP-binding positions include 185 to 187, Arg-211, and 213 to 215; these read GAE and KKH. Residues Glu-222, Arg-243, and 249-252 each bind substrate; that span reads HVQR.

It belongs to the phosphofructokinase type A (PFKA) family. ATP-dependent PFK group I subfamily. Prokaryotic clade 'B1' sub-subfamily. Homotetramer. The cofactor is Mg(2+).

Its subcellular location is the cytoplasm. The catalysed reaction is beta-D-fructose 6-phosphate + ATP = beta-D-fructose 1,6-bisphosphate + ADP + H(+). The protein operates within carbohydrate degradation; glycolysis; D-glyceraldehyde 3-phosphate and glycerone phosphate from D-glucose: step 3/4. With respect to regulation, allosterically activated by ADP and other diphosphonucleosides, and allosterically inhibited by phosphoenolpyruvate. Functionally, catalyzes the phosphorylation of D-fructose 6-phosphate to fructose 1,6-bisphosphate by ATP, the first committing step of glycolysis. The sequence is that of ATP-dependent 6-phosphofructokinase from Bacillus cereus (strain ATCC 14579 / DSM 31 / CCUG 7414 / JCM 2152 / NBRC 15305 / NCIMB 9373 / NCTC 2599 / NRRL B-3711).